A 909-amino-acid chain; its full sequence is Tubulin polyglutamylase TTLL7 (909 aa).

The 353-residue stretch at 40–392 (NGAITANVVG…RASDKKKNLA (353 aa)) folds into the TTL domain. Residues K162, 168 to 169 (MG), 190 to 193 (QEYL), and 203 to 205 (KFD) each bind ATP. R229 is an L-glutamate binding site. An ATP-binding site is contributed by 251-252 (TN). Residues Y253, S254, and K273 each coordinate L-glutamate. Mg(2+) contacts are provided by D338, E351, and N353. K369 serves as a coordination point for L-glutamate. The segment at 390–452 (NLAKQKAEAQ…ISREEYENRH (63 aa)) is c-MTBD region. Disordered regions lie at residues 517-580 (DEKL…KVSY) and 603-688 (KAAR…PSIS). A compositionally biased stretch (basic and acidic residues) spans 518–531 (EKLSGKPTRPKEPR). Residues 532-542 (TLSSMPESTQT) are compositionally biased toward polar residues. Residues 548–562 (NYSSHSSSNSTGSSS) are compositionally biased toward low complexity. Residues 571–580 (KEGKEKKVSY) are compositionally biased toward basic and acidic residues. Residues 604–625 (AARPFSNSSSPSSAASMRRSVS) show a composition bias toward low complexity. Residues 626–657 (CPRSITALNTQSPTTDQRPFSSRISSTITRPL) show a composition bias toward polar residues. The span at 658–673 (SGNRTNSLNRSSSSNR) shows a compositional bias: low complexity. Residues 674-688 (VPQSGTSGSVYPSIS) show a composition bias toward polar residues.

Belongs to the tubulin--tyrosine ligase family. Interacts with both alpha- and beta-tubulin (via C-terminal tubulin tails). Requires Mg(2+) as cofactor.

Its subcellular location is the cell projection. The protein localises to the cilium. The protein resides in the cytoplasm. It localises to the cytoskeleton. It is found in the cilium basal body. Its subcellular location is the dendrite. The protein localises to the perikaryon. It catalyses the reaction L-glutamyl-[protein] + L-glutamate + ATP = gamma-L-glutamyl-L-glutamyl-[protein] + ADP + phosphate + H(+). It carries out the reaction (L-glutamyl)(n)-gamma-L-glutamyl-L-glutamyl-[protein] + L-glutamate + ATP = (L-glutamyl)(n+1)-gamma-L-glutamyl-L-glutamyl-[protein] + ADP + phosphate + H(+). Polyglutamylase which modifies tubulin, generating polyglutamate side chains of variable lengths on the gamma-carboxyl group of specific glutamate residues within the C-terminal tail of tubulin. Mediates both ATP-dependent initiation and elongation steps of the polyglutamylation reaction. Preferentially modifies the beta-tubulin tail over an alpha-tail. Competes with monoglycylase TTLL3 for modification site on beta-tubulin substrate, thereby creating an anticorrelation between glycylation and glutamylation reactions. This Xenopus tropicalis (Western clawed frog) protein is Tubulin polyglutamylase TTLL7.